Reading from the N-terminus, the 1214-residue chain is Zinc finger E-box-binding homeobox 2 (1214 aa).

The segment at 1 to 101 (MKQPIMADGP…GVEHPWHNNE (101 aa)) is disordered. The span at 12–24 (CKRRKQANPRRKN) shows a compositional bias: basic residues. Polar residues predominate over residues 57–74 (DQETSPASVPNHESSPHV). Positions 89-98 (REGGVEHPWH) are enriched in basic and acidic residues. The residue at position 142 (serine 142) is a Phosphoserine. 3 consecutive C2H2-type zinc fingers follow at residues 211–234 (LTCPYCDRGYKRLTSLKEHIKYRH), 241–263 (FSCPLCSYTFAYRTQLERHMVTH), and 282–304 (FKCTECGKAFKYKHHLKEHLRIH). The segment at 310 to 334 (YECPNCKKRFSHSGSYSSHISSKKC) adopts a C2H2-type 4; atypical zinc-finger fold. Phosphoserine occurs at positions 356, 360, and 364. Lysine 377 is subject to N6-acetyllysine. Lysine 391 is covalently cross-linked (Glycyl lysine isopeptide (Lys-Gly) (interchain with G-Cter in SUMO); alternate). Lysine 391 is covalently cross-linked (Glycyl lysine isopeptide (Lys-Gly) (interchain with G-Cter in SUMO2); alternate). Positions 437 to 487 (QHLGVGMEAPLLGFPTMNSNLSEVQKVLQIVDNTVSRQKMDCKAEEISKLK) are SMAD-MH2 binding domain. Residues lysine 479 and lysine 555 each participate in a glycyl lysine isopeptide (Lys-Gly) (interchain with G-Cter in SUMO2) cross-link. Residues 581–605 (FSCQFCKESFPGPIPLHQHERYLCK) form a C2H2-type 5; atypical zinc finger. Glycyl lysine isopeptide (Lys-Gly) (interchain with G-Cter in SUMO2) cross-links involve residues lysine 611 and lysine 632. The segment at residues 644–703 (GMTSPINPYKDHMSVLKAYYAMNMEPNSDELLKISIAVGLPQEFVKEWFEQRKVYQYSNS) is a DNA-binding region (homeobox; atypical). At serine 647 the chain carries Phosphoserine. Residues 702–715 (NSRSPSLERSSKPL) are compositionally biased toward low complexity. Disordered regions lie at residues 702-740 (NSRSPSLERSSKPLAPNSNPPTKDSLLPRSPVKPMDSIT), 771-810 (PVEKLDHSRSNTPSPLNLSSTSSKNSHSSSYTPNSFSSEE), and 832-857 (ATKNKTKASSISLDHNSVSSSSENSD). Lysine 713 is covalently cross-linked (Glycyl lysine isopeptide (Lys-Gly) (interchain with G-Cter in SUMO2)). A phosphoserine mark is found at serine 731 and serine 780. Low complexity-rich tracts occupy residues 780 to 808 (SNTPSPLNLSSTSSKNSHSSSYTPNSFSS) and 840 to 854 (SSISLDHNSVSSSSE). Threonine 782 is subject to Phosphothreonine. Serine 784 carries the phosphoserine modification. A Glycyl lysine isopeptide (Lys-Gly) (interchain with G-Cter in SUMO); alternate cross-link involves residue lysine 866. Lysine 866 is covalently cross-linked (Glycyl lysine isopeptide (Lys-Gly) (interchain with G-Cter in SUMO2); alternate). C2H2-type zinc fingers lie at residues 999 to 1021 (YACDLCDKTFQKSSSLLRHKYEH) and 1027 to 1049 (HQCQICKKAFKHKHHLIEHSRLH). The C2H2-type 8; atypical zinc-finger motif lies at 1055–1076 (YQCDKCGKRFSHSGSYSQHMNH). The segment at 1117–1214 (TPQGYSDSEE…HEEDNMEDGM (98 aa)) is disordered. Phosphoserine occurs at positions 1122 and 1124. Residues 1127 to 1155 (RESMPRDGESEKEHEKEGEDGYGKLGRQD) show a composition bias toward basic and acidic residues. The segment covering 1156–1167 (GDEEFEEEEEES) has biased composition (acidic residues). 2 stretches are compositionally biased toward basic and acidic residues: residues 1168-1179 (ENKSMDTDPETI) and 1186-1205 (GDHSMDDSSEDGKMETKSDH). Serine 1203 carries the post-translational modification Phosphoserine.

It belongs to the delta-EF1/ZFH-1 C2H2-type zinc-finger family. As to quaternary structure, binds activated SMAD1, activated SMAD2 and activated SMAD3; binding with SMAD4 is not detected. Interacts with CBX4 and CTBP1. Post-translationally, sumoylation on Lys-391 and Lys-866 is promoted by the E3 SUMO-protein ligase CBX4, and impairs interaction with CTBP1 and transcription repression activity.

It localises to the nucleus. The protein resides in the chromosome. Its function is as follows. Transcriptional inhibitor that binds to DNA sequence 5'-CACCT-3' in different promoters. Represses transcription of E-cadherin. Represses expression of MEOX2. The sequence is that of Zinc finger E-box-binding homeobox 2 from Homo sapiens (Human).